Consider the following 426-residue polypeptide: Putative two-component response regulator ARR20 (426 aa).

The region spanning 40–155 (SNRVLLVGAD…VIAVLWRHVY (116 aa)) is the Response regulatory domain. Asp91 is modified (4-aspartylphosphate). The disordered stretch occupies residues 161–216 (KSGLDKPGESGTVESDPDEYDDLEQDNLYESNEEGSKNTCDHKEEKSPTKKPRMQW). The span at 175 to 193 (SDPDEYDDLEQDNLYESNE) shows a compositional bias: acidic residues. The span at 194-208 (EGSKNTCDHKEEKSP) shows a compositional bias: basic and acidic residues. The Nuclear localization signal motif lies at 210-213 (KKPR). A DNA-binding region (myb-like GARP) is located at residues 213-268 (RMQWTPELHHKFEVAVEKMGSLEKAFPKTILKYMQEELNVQGLTRNNVASHLQKYR).

This sequence belongs to the ARR family. Type-B subfamily. As to quaternary structure, binds the target DNA as a monomer. In terms of processing, two-component system major event consists of a His-to-Asp phosphorelay between a sensor histidine kinase (HK) and a response regulator (RR). In plants, the His-to-Asp phosphorelay involves an additional intermediate named Histidine-containing phosphotransfer protein (HPt). This multistep phosphorelay consists of a His-Asp-His-Asp sequential transfer of a phosphate group between first a His and an Asp of the HK protein, followed by the transfer to a conserved His of the HPt protein and finally the transfer to an Asp in the receiver domain of the RR protein. Predominantly expressed in mature pistil tip. Also detected in the shoot apical meristem as well as vascular tissue and hydathodes of the leaves.

Its subcellular location is the nucleus. Its function is as follows. Putative transcriptional activator that binds specifically to the DNA sequence 5'-[AG]GATT-3'. Functions as a response regulator involved in His-to-Asp phosphorelay signal transduction system. Phosphorylation of the Asp residue in the receiver domain activates the ability of the protein to promote the transcription of target genes. Could directly activate some type-A response regulators in response to cytokinins. The protein is Putative two-component response regulator ARR20 (ARR20) of Arabidopsis thaliana (Mouse-ear cress).